Here is a 423-residue protein sequence, read N- to C-terminus: Lipase member M (423 aa).

The N-terminal stretch at 1-33 is a signal peptide; it reads MLETLSRQWIVSHRMEMWLLILVAYMFQRNVNS. Residue Asn-48 is glycosylated (N-linked (GlcNAc...) asparagine). The AB hydrolase-1 domain maps to 92–392; that stretch reads PVVLLQHGLV…EWAHVDFIWG (301 aa). The active-site Nucleophile is the Ser-186. A disulfide bond links Cys-260 and Cys-269. Active-site charge relay system residues include Asp-357 and His-386.

Belongs to the AB hydrolase superfamily. Lipase family. In terms of tissue distribution, exclusively expressed in the epidermis within the granular keratinocytes.

It is found in the secreted. Plays a highly specific role in the last step of keratinocyte differentiation. May have an essential function in lipid metabolism of the most differentiated epidermal layers. The protein is Lipase member M (LIPM) of Homo sapiens (Human).